The following is a 355-amino-acid chain: UDP-N-acetylglucosamine--N-acetylmuramyl-(pentapeptide) pyrophosphoryl-undecaprenol N-acetylglucosamine transferase (355 aa).

Residues 14–16 (TGG), asparagine 126, arginine 164, serine 190, isoleucine 243, 262–267 (ALTVAE), and glutamine 288 contribute to the UDP-N-acetyl-alpha-D-glucosamine site.

It belongs to the glycosyltransferase 28 family. MurG subfamily.

The protein localises to the cell inner membrane. The catalysed reaction is di-trans,octa-cis-undecaprenyl diphospho-N-acetyl-alpha-D-muramoyl-L-alanyl-D-glutamyl-meso-2,6-diaminopimeloyl-D-alanyl-D-alanine + UDP-N-acetyl-alpha-D-glucosamine = di-trans,octa-cis-undecaprenyl diphospho-[N-acetyl-alpha-D-glucosaminyl-(1-&gt;4)]-N-acetyl-alpha-D-muramoyl-L-alanyl-D-glutamyl-meso-2,6-diaminopimeloyl-D-alanyl-D-alanine + UDP + H(+). It participates in cell wall biogenesis; peptidoglycan biosynthesis. In terms of biological role, cell wall formation. Catalyzes the transfer of a GlcNAc subunit on undecaprenyl-pyrophosphoryl-MurNAc-pentapeptide (lipid intermediate I) to form undecaprenyl-pyrophosphoryl-MurNAc-(pentapeptide)GlcNAc (lipid intermediate II). In Psychromonas ingrahamii (strain DSM 17664 / CCUG 51855 / 37), this protein is UDP-N-acetylglucosamine--N-acetylmuramyl-(pentapeptide) pyrophosphoryl-undecaprenol N-acetylglucosamine transferase.